The primary structure comprises 208 residues: Methyl-CpG-binding domain protein 3-like 5 (208 aa).

This sequence belongs to the MBD3L family.

This is Methyl-CpG-binding domain protein 3-like 5 (MBD3L5) from Homo sapiens (Human).